Here is a 522-residue protein sequence, read N- to C-terminus: Glycogen synthase (522 aa).

A disordered region spans residues 1–29 (MISAVLDTQGDHPQQQAGDRAAPSVPVPG). Lys-58 contacts ADP-alpha-D-glucose.

This sequence belongs to the glycosyltransferase 1 family. Bacterial/plant glycogen synthase subfamily.

It carries out the reaction [(1-&gt;4)-alpha-D-glucosyl](n) + ADP-alpha-D-glucose = [(1-&gt;4)-alpha-D-glucosyl](n+1) + ADP + H(+). The protein operates within glycan biosynthesis; glycogen biosynthesis. Its function is as follows. Synthesizes alpha-1,4-glucan chains using ADP-glucose. The sequence is that of Glycogen synthase from Pseudomonas fluorescens (strain ATCC BAA-477 / NRRL B-23932 / Pf-5).